The sequence spans 256 residues: Major prion protein (256 aa).

An N-terminal signal peptide occupies residues 1–24; it reads MVKSHIGSWILVLFVAMWSDVGLC. The segment at 25-233 is interaction with GRB2, ERI3 and SYN1; it reads KKRPKPGGGW…ESQAYYQRGA (209 aa). Residues 28–110 form a disordered region; it reads PKPGGGWNTG…QWNKPSKPKT (83 aa). Tandem repeats lie at residues 54 to 62, 63 to 70, 71 to 78, 79 to 86, and 87 to 95. The 5 X 8 AA tandem repeats of P-H-G-G-G-W-G-Q stretch occupies residues 54–95; that stretch reads PQGGGGWGQPHGGGWGQPHGGGWGQPHGGGWGQPHGGGGWGQ. The segment covering 55 to 97 has biased composition (gly residues); that stretch reads QGGGGWGQPHGGGWGQPHGGGWGQPHGGGWGQPHGGGGWGQGG. Residues H64, G65, G66, H72, G73, G74, H80, G81, G82, H88, G90, and G91 each contribute to the Cu(2+) site. C182 and C217 are joined by a disulfide. N-linked (GlcNAc...) (complex) asparagine glycans are attached at residues N184 and N200. A233 is lipidated: GPI-anchor amidated alanine. A propeptide spans 234–256 (removed in mature form); it reads SVILFSSPPVILLISFLIFLIVG.

It belongs to the prion family. As to quaternary structure, monomer and homodimer. Has a tendency to aggregate into amyloid fibrils containing a cross-beta spine, formed by a steric zipper of superposed beta-strands. Soluble oligomers may represent an intermediate stage on the path to fibril formation. Copper binding may promote oligomerization. Interacts with GRB2, APP, ERI3/PRNPIP and SYN1. Mislocalized cytosolically exposed PrP interacts with MGRN1; this interaction alters MGRN1 subcellular location and causes lysosomal enlargement. Interacts with KIAA1191.

Its subcellular location is the cell membrane. The protein localises to the golgi apparatus. Its function is as follows. Its primary physiological function is unclear. Has cytoprotective activity against internal or environmental stresses. May play a role in neuronal development and synaptic plasticity. May be required for neuronal myelin sheath maintenance. May play a role in iron uptake and iron homeostasis. Soluble oligomers are toxic to cultured neuroblastoma cells and induce apoptosis (in vitro). Association with GPC1 (via its heparan sulfate chains) targets PRNP to lipid rafts. Also provides Cu(2+) or Zn(2+) for the ascorbate-mediated GPC1 deaminase degradation of its heparan sulfate side chains. This Ovis aries (Sheep) protein is Major prion protein (PRNP).